Consider the following 150-residue polypeptide: Small ribosomal subunit protein uS19y (150 aa).

This sequence belongs to the universal ribosomal protein uS19 family.

The protein resides in the cytoplasm. The protein is Small ribosomal subunit protein uS19y (RPS15C) of Arabidopsis thaliana (Mouse-ear cress).